We begin with the raw amino-acid sequence, 249 residues long: ATP synthase subunit a, chloroplastic (249 aa).

5 helical membrane-spanning segments follow: residues 40 to 60 (QVLI…VLAI), 97 to 117 (VPFI…GALL), 136 to 156 (INTT…AGLS), 201 to 221 (LVVV…VMFL), and 222 to 242 (GLFT…AYIG).

The protein belongs to the ATPase A chain family. In terms of assembly, F-type ATPases have 2 components, CF(1) - the catalytic core - and CF(0) - the membrane proton channel. CF(1) has five subunits: alpha(3), beta(3), gamma(1), delta(1), epsilon(1). CF(0) has four main subunits: a, b, b' and c.

It is found in the plastid. Its subcellular location is the chloroplast thylakoid membrane. Its function is as follows. Key component of the proton channel; it plays a direct role in the translocation of protons across the membrane. The sequence is that of ATP synthase subunit a, chloroplastic from Capsella bursa-pastoris (Shepherd's purse).